Here is a 188-residue protein sequence, read N- to C-terminus: Protein SSX3 (188 aa).

In terms of domain architecture, KRAB-related spans 20–83; sequence KIQKAFDDIA…KRVTDFQGND (64 aa). The tract at residues 113-162 is disordered; that stretch reads PKKPAEEGNVSKEVPEASGPQNDGKQLCPPGKPTTSEKINMISGPKRGEH. Residues 115–127 show a composition bias toward basic and acidic residues; it reads KPAEEGNVSKEVP. A Phosphoserine modification is found at S123.

The protein belongs to the SSX family. As to quaternary structure, interacts with SSX2IP.

Could act as a modulator of transcription. This chain is Protein SSX3 (SSX3), found in Homo sapiens (Human).